The sequence spans 317 residues: Probable cell division protein WhiA (317 aa).

Positions 276–310 form a DNA-binding region, H-T-H motif; the sequence is TLKELGEMVSGGKISKSGINHRLRKIDDIAEKLRA.

Belongs to the WhiA family.

Its function is as follows. Involved in cell division and chromosome segregation. The polypeptide is Probable cell division protein WhiA (Bacillus thuringiensis (strain Al Hakam)).